The sequence spans 95 residues: Co-chaperonin GroES (95 aa).

Belongs to the GroES chaperonin family. In terms of assembly, heptamer of 7 subunits arranged in a ring. Interacts with the chaperonin GroEL.

It localises to the cytoplasm. Its function is as follows. Together with the chaperonin GroEL, plays an essential role in assisting protein folding. The GroEL-GroES system forms a nano-cage that allows encapsulation of the non-native substrate proteins and provides a physical environment optimized to promote and accelerate protein folding. GroES binds to the apical surface of the GroEL ring, thereby capping the opening of the GroEL channel. The chain is Co-chaperonin GroES from Desulfatibacillum aliphaticivorans.